Consider the following 489-residue polypeptide: Rhamnulokinase (489 aa).

ATP is bound at residue 13 to 17; it reads ASSGR. A disulfide bridge links Cys68 with Cys222. Substrate contacts are provided by residues Gly83 and 236-238; that span reads HDT. Asp237 (proton acceptor) is an active-site residue. Thr259 is a binding site for ATP. Position 296 (Asn296) interacts with substrate. Gln304 serves as a coordination point for ATP. Cys353 and Cys370 are oxidised to a cystine. Gly402 is an ATP binding site. The cysteines at positions 413 and 417 are disulfide-linked.

Belongs to the rhamnulokinase family. It depends on Mg(2+) as a cofactor.

The catalysed reaction is L-rhamnulose + ATP = L-rhamnulose 1-phosphate + ADP + H(+). It functions in the pathway carbohydrate degradation; L-rhamnose degradation; glycerone phosphate from L-rhamnose: step 2/3. In terms of biological role, involved in the catabolism of L-rhamnose (6-deoxy-L-mannose). Catalyzes the transfer of the gamma-phosphate group from ATP to the 1-hydroxyl group of L-rhamnulose to yield L-rhamnulose 1-phosphate. This chain is Rhamnulokinase, found in Salmonella typhi.